Consider the following 214-residue polypeptide: Cytochrome b (214 aa).

4 helical membrane-spanning segments follow: residues 31 to 51, 75 to 96, 111 to 131, and 176 to 196; these read FGSMLLSCSMIQIMTGFFLAI, WIMQNTHAIGASLFFICIYIHI, WLSGTTLLIILMATAFFGYVL, and FFALHFILPFAIISMSSIHIL. Residues His81 and His95 each coordinate heme b. The heme b site is built by His180 and His194. His199 is an a ubiquinone binding site.

Belongs to the cytochrome b family. As to quaternary structure, the cytochrome bc1 complex contains 3 respiratory subunits (MT-CYB, CYC1 and UQCRFS1), 2 core proteins (UQCRC1 and UQCRC2) and probably 6 low-molecular weight proteins. Heme b is required as a cofactor.

The protein resides in the mitochondrion inner membrane. Its function is as follows. Component of the ubiquinol-cytochrome c reductase complex (complex III or cytochrome b-c1 complex) that is part of the mitochondrial respiratory chain. The b-c1 complex mediates electron transfer from ubiquinol to cytochrome c. Contributes to the generation of a proton gradient across the mitochondrial membrane that is then used for ATP synthesis. This Trimeresurus stejnegeri (Chinese green tree viper) protein is Cytochrome b (MT-CYB).